The primary structure comprises 147 residues: Hemoglobin subunit beta (147 aa).

In terms of domain architecture, Globin spans Leu3–His147. The residue at position 13 (Thr13) is a Phosphothreonine. The residue at position 45 (Ser45) is a Phosphoserine. Residue Lys60 is modified to N6-acetyllysine. His64 is a binding site for heme b. Position 83 is an N6-acetyllysine (Lys83). A heme b-binding site is contributed by His93. An S-nitrosocysteine modification is found at Cys94. Lys145 carries the N6-acetyllysine modification.

This sequence belongs to the globin family. In terms of assembly, heterotetramer of two alpha chains and two beta chains. In terms of tissue distribution, red blood cells.

Involved in oxygen transport from the lung to the various peripheral tissues. The protein is Hemoglobin subunit beta (HBB) of Eulemur fulvus fulvus (Brown lemur).